Here is a 188-residue protein sequence, read N- to C-terminus: Elongation factor P (188 aa).

Lys34 carries the post-translational modification N6-(3,6-diaminohexanoyl)-5-hydroxylysine.

It belongs to the elongation factor P family. May be beta-lysylated on the epsilon-amino group of Lys-34 by the combined action of EpmA and EpmB, and then hydroxylated on the C5 position of the same residue by EpmC (if this protein is present). Lysylation is critical for the stimulatory effect of EF-P on peptide-bond formation. The lysylation moiety may extend toward the peptidyltransferase center and stabilize the terminal 3-CCA end of the tRNA. Hydroxylation of the C5 position on Lys-34 may allow additional potential stabilizing hydrogen-bond interactions with the P-tRNA.

Its subcellular location is the cytoplasm. It participates in protein biosynthesis; polypeptide chain elongation. In terms of biological role, involved in peptide bond synthesis. Alleviates ribosome stalling that occurs when 3 or more consecutive Pro residues or the sequence PPG is present in a protein, possibly by augmenting the peptidyl transferase activity of the ribosome. Modification of Lys-34 is required for alleviation. The sequence is that of Elongation factor P from Serratia proteamaculans (strain 568).